Reading from the N-terminus, the 448-residue chain is Ribosomal protein uS12 methylthiotransferase RimO (448 aa).

Positions 10 to 120 constitute an MTTase N-terminal domain; that stretch reads PNIGFVSLGC…VMEHVHKYVP (111 aa). [4Fe-4S] cluster contacts are provided by cysteine 19, cysteine 55, cysteine 84, cysteine 152, cysteine 156, and cysteine 159. The Radical SAM core domain maps to 138–379; sequence LTPKHYAYLK…MELQQQISAQ (242 aa). In terms of domain architecture, TRAM spans 382–448; that stretch reads QQKIGKTLPV…ADEYDLWGTC (67 aa).

The protein belongs to the methylthiotransferase family. RimO subfamily. It depends on [4Fe-4S] cluster as a cofactor.

It localises to the cytoplasm. The enzyme catalyses L-aspartate(89)-[ribosomal protein uS12]-hydrogen + (sulfur carrier)-SH + AH2 + 2 S-adenosyl-L-methionine = 3-methylsulfanyl-L-aspartate(89)-[ribosomal protein uS12]-hydrogen + (sulfur carrier)-H + 5'-deoxyadenosine + L-methionine + A + S-adenosyl-L-homocysteine + 2 H(+). Functionally, catalyzes the methylthiolation of an aspartic acid residue of ribosomal protein uS12. The protein is Ribosomal protein uS12 methylthiotransferase RimO of Mannheimia succiniciproducens (strain KCTC 0769BP / MBEL55E).